The sequence spans 802 residues: Neuronal PAS domain-containing protein 4 (802 aa).

The interval 1–13 is basic motif; degenerate; the sequence is MYRSTKGASKARR. The bHLH domain occupies 1 to 53; it reads MYRSTKGASKARRDQINAEIRNLKELLPLAEADKVRLSYLHIMSLACIYTRKG. Residues 5–38 adopt a coiled-coil conformation; the sequence is TKGASKARRDQINAEIRNLKELLPLAEADKVRLS. The segment at 14–53 is helix-loop-helix motif; the sequence is DQINAEIRNLKELLPLAEADKVRLSYLHIMSLACIYTRKG. PAS domains are found at residues 70–144 and 203–275; these read SAQE…LDAD and PGPG…LAEN. The 40-residue stretch at 280–319 folds into the PAC domain; it reads AEMVVRLQAKHGGWTWIYCMLYSDGPEGPITANNYPISDT. Composition is skewed to polar residues over residues 472 to 495, 502 to 518, and 527 to 555; these read PSSA…SSAR, TPCT…STAT, and THEQ…QLSP. Residues 472-555 are disordered; sequence PSSATFPDPL…SQTFPEQLSP (84 aa). The stretch at 624 to 648 forms a coiled coil; it reads YTEKEQNEIDRLIQQISQLAQGMDR.

As to quaternary structure, efficient DNA binding requires dimerization with another bHLH protein. Heterodimer; forms a heterodimer with ARNT, ARNT2 or BMAL1. Post-translationally, ubiquitinated, leading to degradation by the proteosome. Specifically expressed in neurons. Expressed in the lateral nucleus of the amygdala (at protein level).

The protein resides in the nucleus. Functionally, transcription factor expressed in neurons of the brain that regulates the excitatory-inhibitory balance within neural circuits and is required for contextual memory in the hippocampus. Plays a key role in the structural and functional plasticity of neurons. Acts as an early-response transcription factor in both excitatory and inhibitory neurons, where it induces distinct but overlapping sets of late-response genes in these two types of neurons, allowing the synapses that form on inhibitory and excitatory neurons to be modified by neuronal activity in a manner specific to their function within a circuit, thereby facilitating appropriate circuit responses to sensory experience. In excitatory neurons, activates transcription of BDNF, which in turn controls the number of GABA-releasing synapses that form on excitatory neurons, thereby promoting an increased number of inhibitory synapses on excitatory neurons. In inhibitory neurons, regulates a distinct set of target genes that serve to increase excitatory input onto somatostatin neurons, probably resulting in enhanced feedback inhibition within cortical circuits. The excitatory and inhibitory balance in neurons affects a number of processes, such as short-term and long-term memory, acquisition of experience, fear memory, response to stress and social behavior. Acts as a regulator of dendritic spine development in olfactory bulb granule cells in a sensory-experience-dependent manner by regulating expression of MDM2. Efficient DNA binding requires dimerization with another bHLH protein, such as ARNT, ARNT2 or BMAL1. Can activate the CME (CNS midline enhancer) element. In Rattus norvegicus (Rat), this protein is Neuronal PAS domain-containing protein 4.